The primary structure comprises 361 residues: Innexin inx1 (361 aa).

Topologically, residues 1 to 28 (MYKLLGGLKEYLKWQDIVTDNAIFRLHN) are cytoplasmic. A helical transmembrane segment spans residues 29-49 (LFTTVLLLTCSLIITATQYVG). The Extracellular segment spans residues 50 to 109 (NPIHCIVNGLPVRPINTYCWITSTFTMPDAFLRQVGSEVAHPGVANDFGDEDAKKYYTYY). The helical transmembrane segment at 110–130 (QWVCFVLFFQAMLCYTPKWIW) threads the bilayer. Over 131 to 181 (DSIEGGLLRTLIMGLNRGLCQDDEKCMKKKALIEYLLRHIKRHNMYALKYW) the chain is Cytoplasmic. Residues 182 to 202 (FCETLCLVNIIGQLYLMNHFF) form a helical membrane-spanning segment. At 203-267 (DGEFFSYGLR…LPLNIVNEKT (65 aa)) the chain is on the extracellular side. The helical transmembrane segment at 268–288 (YIFLWFWYIILAALLSVLVVY) threads the bilayer. Residues 289 to 361 (RAVILAVPSV…KIETPSSNNP (73 aa)) lie on the Cytoplasmic side of the membrane.

The protein belongs to the pannexin family. In terms of tissue distribution, expressed in embryonic neural precursors including the dorsal median neuroblast, glial cells, neuropilar glial ring, developing myoblasts cells and in a circumferential band of epithelial cells at the trochanter/coxa boundary stripe in the developing limb.

The protein localises to the cell membrane. Its subcellular location is the cell junction. The protein resides in the gap junction. Functionally, structural components of the gap junctions. The chain is Innexin inx1 (inx1) from Schistocerca americana (American grasshopper).